A 400-amino-acid chain; its full sequence is Acetate kinase (400 aa).

A Mg(2+)-binding site is contributed by N10. K17 lines the ATP pocket. R89 contacts substrate. The active-site Proton donor/acceptor is D148. ATP-binding positions include 208–212 (HLGNG), 283–285 (DCR), and 331–335 (GIGEN). E385 is a binding site for Mg(2+).

This sequence belongs to the acetokinase family. As to quaternary structure, homodimer. Requires Mg(2+) as cofactor. The cofactor is Mn(2+).

The protein resides in the cytoplasm. It carries out the reaction acetate + ATP = acetyl phosphate + ADP. It participates in metabolic intermediate biosynthesis; acetyl-CoA biosynthesis; acetyl-CoA from acetate: step 1/2. In terms of biological role, catalyzes the formation of acetyl phosphate from acetate and ATP. Can also catalyze the reverse reaction. This chain is Acetate kinase, found in Haemophilus ducreyi (strain 35000HP / ATCC 700724).